The primary structure comprises 429 residues: Alpha-galactosidase A (429 aa).

The signal sequence occupies residues 1–31; it reads MQLRNPELHLGCALALRFLALVSWDIPGARA. 2 disulfide bridges follow: Cys-52–Cys-94 and Cys-56–Cys-63. Asn-139 carries an N-linked (GlcNAc...) asparagine glycan. A disulfide bridge links Cys-142 with Cys-172. The active-site Nucleophile is Asp-170. N-linked (GlcNAc...) asparagine glycosylation is present at Asn-192. Cys-202 and Cys-223 are oxidised to a cystine. 203–207 is a binding site for substrate; it reads EWPLY. Asn-215 carries N-linked (GlcNAc...) asparagine glycosylation. The active-site Proton donor is the Asp-231. Cys-378 and Cys-382 are oxidised to a cystine.

Belongs to the glycosyl hydrolase 27 family. In terms of assembly, homodimer.

It is found in the lysosome. It catalyses the reaction Hydrolysis of terminal, non-reducing alpha-D-galactose residues in alpha-D-galactosides, including galactose oligosaccharides, galactomannans and galactolipids.. It carries out the reaction a globoside Gb3Cer (d18:1(4E)) + H2O = a beta-D-Gal-(1-&gt;4)-beta-D-Glc-(1&lt;-&gt;1)-Cer(d18:1(4E)) + D-galactose. The catalysed reaction is a globoside Gb3Cer + H2O = a beta-D-galactosyl-(1-&gt;4)-beta-D-glucosyl-(1&lt;-&gt;1)-ceramide + D-galactose. Its activity is regulated as follows. Galactosylgalactosylglucosylceramidase activity is stimulated by saposin B and ammonium chloride. In terms of biological role, catalyzes the hydrolysis of glycosphingolipids and participates in their degradation in the lysosome. This Homo sapiens (Human) protein is Alpha-galactosidase A.